We begin with the raw amino-acid sequence, 353 residues long: UPF0283 membrane protein YcjF (353 aa).

3 helical membrane-spanning segments follow: residues Met-70–Thr-90, Val-100–Val-120, and Glu-213–Trp-233.

The protein belongs to the UPF0283 family.

Its subcellular location is the cell inner membrane. The polypeptide is UPF0283 membrane protein YcjF (Escherichia coli O127:H6 (strain E2348/69 / EPEC)).